Consider the following 588-residue polypeptide: Sentrin-specific protease 2 (588 aa).

Residues 28–31 (KRRR) carry the Nuclear localization signal motif. Position 32 is a phosphoserine (serine 32). The short motif at 47–52 (PAKRPR) is the Nuclear localization signal element. The interval 157 to 184 (EGYNRRPSGRRHSKSNPESSLTWKPQEQ) is disordered. Residues 172–184 (NPESSLTWKPQEQ) are compositionally biased toward polar residues. A Nuclear export signal motif is present at residues 316 to 331 (MEPDLSEEVSARLRLG). 2 positions are modified to phosphoserine: serine 332 and serine 343. Residues 394–558 (LRITRGDIQT…MFTCKYADYI (165 aa)) form a protease region. Active-site residues include histidine 477 and aspartate 494. The active-site Nucleophile is cysteine 547.

It belongs to the peptidase C48 family. In terms of assembly, binds to SUMO2 and SUMO3. Interacts with the C-terminal domain of NUP153 via its N-terminus. Interacts with MTA1. Post-translationally, polyubiquitinated; which leads to proteasomal degradation. As to expression, highly expressed in testis. Detected in brain, heart and thymus.

The protein resides in the nucleus. It localises to the nuclear pore complex. The protein localises to the nucleus membrane. Its subcellular location is the cytoplasm. It is found in the cytoplasmic vesicle. The protein resides in the PML body. In terms of biological role, protease that catalyzes two essential functions in the SUMO pathway. The first is the hydrolysis of an alpha-linked peptide bond at the C-terminal end of the small ubiquitin-like modifier (SUMO) propeptides, SUMO1, SUMO2 and SUMO3 leading to the mature form of the proteins. The second is the deconjugation of SUMO1, SUMO2 and SUMO3 from targeted proteins, by cleaving an epsilon-linked peptide bond between the C-terminal glycine of the mature SUMO and the lysine epsilon-amino group of the target protein. May down-regulate CTNNB1 levels and thereby modulate the Wnt pathway. Deconjugates SUMO2 from MTA1. Plays a dynamic role in adipogenesis by desumoylating and promoting the stabilization of CEBPB. Acts as a regulator of the cGAS-STING pathway by catalyzing desumoylation of CGAS and STING1 during the late phase of viral infection. Its function is as follows. Activates transcription. The chain is Sentrin-specific protease 2 (Senp2) from Mus musculus (Mouse).